Reading from the N-terminus, the 573-residue chain is Formate--tetrahydrofolate ligase 3 (573 aa).

Residue 66-73 (TPLGEGKT) coordinates ATP.

Belongs to the formate--tetrahydrofolate ligase family.

The enzyme catalyses (6S)-5,6,7,8-tetrahydrofolate + formate + ATP = (6R)-10-formyltetrahydrofolate + ADP + phosphate. The protein operates within one-carbon metabolism; tetrahydrofolate interconversion. This Rubrobacter xylanophilus (strain DSM 9941 / JCM 11954 / NBRC 16129 / PRD-1) protein is Formate--tetrahydrofolate ligase 3.